The chain runs to 224 residues: 7-cyano-7-deazaguanine synthase (224 aa).

Position 10–20 (10–20 (LSGGLDSATVV)) interacts with ATP. The Zn(2+) site is built by cysteine 189, cysteine 199, cysteine 202, and cysteine 205.

It belongs to the QueC family. Requires Zn(2+) as cofactor.

It carries out the reaction 7-carboxy-7-deazaguanine + NH4(+) + ATP = 7-cyano-7-deazaguanine + ADP + phosphate + H2O + H(+). It participates in purine metabolism; 7-cyano-7-deazaguanine biosynthesis. Its function is as follows. Catalyzes the ATP-dependent conversion of 7-carboxy-7-deazaguanine (CDG) to 7-cyano-7-deazaguanine (preQ(0)). In Ectopseudomonas mendocina (strain ymp) (Pseudomonas mendocina), this protein is 7-cyano-7-deazaguanine synthase.